The primary structure comprises 262 residues: MQVDLLSSAQSAHALHLFHQHSPLVHCMTNDVVQTFTANTLLALGASPAMVIETEEASQFAAIASALLINVGTLTQPRAQAMRAAVEQAKSSQTRWTLDPVAVGALDYRRHFCHELLSFKPAAIRGNASEIMALAGIANGGRGVDTTDAAANAIPAAQTLARETGAIVVVTGEVDYVTDGHRIIGIHGGDPLMTKVVGTGCALSAVVAACCALPGDTLENVASACHWMKQAGERAVARSEGPGSFVPHFLDALWQLTQEVQA.

A substrate-binding site is contributed by Met50. Arg125 and Thr171 together coordinate ATP. Gly198 serves as a coordination point for substrate.

It belongs to the Thz kinase family. Mg(2+) is required as a cofactor.

It catalyses the reaction 5-(2-hydroxyethyl)-4-methylthiazole + ATP = 4-methyl-5-(2-phosphooxyethyl)-thiazole + ADP + H(+). Its pathway is cofactor biosynthesis; thiamine diphosphate biosynthesis; 4-methyl-5-(2-phosphoethyl)-thiazole from 5-(2-hydroxyethyl)-4-methylthiazole: step 1/1. Its function is as follows. Catalyzes the phosphorylation of the hydroxyl group of 4-methyl-5-beta-hydroxyethylthiazole (THZ). This chain is Hydroxyethylthiazole kinase, found in Shigella flexneri serotype 5b (strain 8401).